A 132-amino-acid chain; its full sequence is Cliotide T2 (132 aa).

The first 28 residues, 1 to 28 (MAYVRLTSLAVLFFLAASVMLNVKKTEG), serve as a signal peptide directing secretion. Positions 29–58 (GEFLKCGESCVQGECYTPGCSCDWPICKKN) form a cross-link, cyclopeptide (Gly-Asn). 3 disulfide bridges follow: Cys-34-Cys-48, Cys-38-Cys-50, and Cys-43-Cys-55. A propeptide spans 59 to 132 (HIIATNAKTV…NLKMPMTIIN (74 aa)) (removed in mature form).

Post-translationally, this is a cyclic peptide. Expressed in flower, stem, shoot and pod but not in root, leaf, seed and nodule (at protein level).

Probably participates in a plant defense mechanism. Not active against Gram-negative bacteria E.coli ATCC 700926, K.pneumoniae ATTC 13883 and P.aeruginosa ATCC 39018 at concentration up to 100 uM. Has cytotoxic but no hemolytic activity. The sequence is that of Cliotide T2 from Clitoria ternatea (Butterfly pea).